Consider the following 212-residue polypeptide: uncharacterized protein (212 aa).

A disordered region spans residues 1–88; sequence MAEEQKIALE…PAPAKPASAS (88 aa). Ser-13 is modified (phosphoserine). A compositionally biased stretch (pro residues) spans 23–41; that stretch reads ADTPAPAPAEIPAPAPAPT. Over residues 45–54 the composition is skewed to basic and acidic residues; sequence VTKDVAEEKI.

Belongs to the remorin family.

It is found in the cell membrane. This is an uncharacterized protein from Arabidopsis thaliana (Mouse-ear cress).